Reading from the N-terminus, the 479-residue chain is Aspartyl/glutamyl-tRNA(Asn/Gln) amidotransferase subunit B (479 aa).

It belongs to the GatB/GatE family. GatB subfamily. As to quaternary structure, heterotrimer of A, B and C subunits.

It catalyses the reaction L-glutamyl-tRNA(Gln) + L-glutamine + ATP + H2O = L-glutaminyl-tRNA(Gln) + L-glutamate + ADP + phosphate + H(+). The catalysed reaction is L-aspartyl-tRNA(Asn) + L-glutamine + ATP + H2O = L-asparaginyl-tRNA(Asn) + L-glutamate + ADP + phosphate + 2 H(+). In terms of biological role, allows the formation of correctly charged Asn-tRNA(Asn) or Gln-tRNA(Gln) through the transamidation of misacylated Asp-tRNA(Asn) or Glu-tRNA(Gln) in organisms which lack either or both of asparaginyl-tRNA or glutaminyl-tRNA synthetases. The reaction takes place in the presence of glutamine and ATP through an activated phospho-Asp-tRNA(Asn) or phospho-Glu-tRNA(Gln). This is Aspartyl/glutamyl-tRNA(Asn/Gln) amidotransferase subunit B from Clostridium beijerinckii (strain ATCC 51743 / NCIMB 8052) (Clostridium acetobutylicum).